Reading from the N-terminus, the 330-residue chain is GTPase Obg (330 aa).

Residues 1–159 (MNFIDEVKIC…MWIHLSLKLL (159 aa)) enclose the Obg domain. The OBG-type G domain occupies 160–327 (SDVGLVGLPN…IVKLALKTIK (168 aa)). Residues 166–173 (GLPNAGKS), 191–195 (FTTLV), 212–215 (DIPG), 279–282 (NKCD), and 308–310 (STY) each bind GTP. Mg(2+) contacts are provided by Ser-173 and Thr-193.

It belongs to the TRAFAC class OBG-HflX-like GTPase superfamily. OBG GTPase family. As to quaternary structure, monomer. Requires Mg(2+) as cofactor.

Its subcellular location is the cytoplasm. Functionally, an essential GTPase which binds GTP, GDP and possibly (p)ppGpp with moderate affinity, with high nucleotide exchange rates and a fairly low GTP hydrolysis rate. Plays a role in control of the cell cycle, stress response, ribosome biogenesis and in those bacteria that undergo differentiation, in morphogenesis control. This is GTPase Obg from Rickettsia felis (strain ATCC VR-1525 / URRWXCal2) (Rickettsia azadi).